The chain runs to 185 residues: NEDD8-conjugating enzyme UBE2F (185 aa).

The residue at position 1 (Met1) is an N-acetylmethionine. Residues 1 to 29 (MLTLASKLKRDDGLKGSRASATASDSTRR) form an interaction with UBA3 region. The 154-residue stretch at 32–185 (VRDRLLVKEV…VEDYIKRYAR (154 aa)) folds into the UBC core domain. Cys116 serves as the catalytic Glycyl thioester intermediate.

This sequence belongs to the ubiquitin-conjugating enzyme family. UBE2F subfamily. In terms of assembly, interacts with UBA3 and RBX2. Interacts (N-terminally acetylated form) with (via DCUN1 domain) DCUN1D1, DCUN1D2, DCUN1D3, DCUN1D4 and DCUN1D5. The acetylation of Met-1 increases affinity for DCUN1D3 by about 2 orders of magnitude and is crucial for NEDD8 transfer to cullins.

The catalysed reaction is [E1 NEDD8-activating enzyme]-S-[NEDD8 protein]-yl-L-cysteine + [E2 NEDD8-conjugating enzyme]-L-cysteine = [E1 NEDD8-activating enzyme]-L-cysteine + [E2 NEDD8-conjugating enzyme]-S-[NEDD8-protein]-yl-L-cysteine.. The protein operates within protein modification; protein neddylation. Its function is as follows. Accepts the ubiquitin-like protein NEDD8 from the UBA3-NAE1 E1 complex and catalyzes its covalent attachment to other proteins. Together with the E3 ubiquitin ligase RNF7/RBX2, specifically neddylates cullin-5 (CUL5). Does not neddylate CUL1, CUL2, CUL3, CUL4A or CUL4B. Mediates neddylation of the CUL9-RBX1 complex. The protein is NEDD8-conjugating enzyme UBE2F (UBE2F) of Bos taurus (Bovine).